Consider the following 62-residue polypeptide: Large ribosomal subunit protein bL28 (62 aa).

The protein belongs to the bacterial ribosomal protein bL28 family.

This chain is Large ribosomal subunit protein bL28, found in Clostridioides difficile (strain 630) (Peptoclostridium difficile).